The chain runs to 575 residues: Probable ferredoxin/ferredoxin--NADP reductase (575 aa).

2 consecutive 4Fe-4S ferredoxin-type domains span residues 2–29 and 37–66; these read PHVI…PTPD and EMLY…PNTR. Positions 9, 15, 19, 46, 49, 52, and 56 each coordinate [4Fe-4S] cluster. The segment at 115–575 is ferredoxin--NADP reductase; sequence VAVVGSGPAA…GQPIVLTVPL (461 aa). 4 residues coordinate FAD: Ala-123, Glu-143, Leu-151, and Ile-187. Residues Arg-213, 258–261, 302–303, and Glu-314 contribute to the NADP(+) site; these read NGNV and RR. Residues Trp-456 and 463 to 465 each bind FAD; that span reads GFI. Gly-463 contributes to the NADP(+) binding site.

The protein in the C-terminal section; belongs to the ferredoxin--NADP reductase family. [4Fe-4S] cluster is required as a cofactor. Requires FAD as cofactor.

It catalyses the reaction 2 reduced [2Fe-2S]-[ferredoxin] + NADP(+) + H(+) = 2 oxidized [2Fe-2S]-[ferredoxin] + NADPH. The polypeptide is Probable ferredoxin/ferredoxin--NADP reductase (fprB) (Mycobacterium bovis (strain ATCC BAA-935 / AF2122/97)).